A 77-amino-acid polypeptide reads, in one-letter code: U8-lycotoxin-Ls1t (77 aa).

The signal sequence occupies residues 1 to 20 (MKLIIFTGLVPFAIVSLIEA). Residues 21 to 26 (QAENEK) constitute a propeptide that is removed on maturation.

Belongs to the neurotoxin 19 (CSTX) family. 08 (U8-Lctx) subfamily. In terms of processing, contains 4 disulfide bonds. Expressed by the venom gland.

It is found in the secreted. This Lycosa singoriensis (Wolf spider) protein is U8-lycotoxin-Ls1t.